The primary structure comprises 421 residues: Histidine--tRNA ligase (421 aa).

Belongs to the class-II aminoacyl-tRNA synthetase family. In terms of assembly, homodimer.

It localises to the cytoplasm. It catalyses the reaction tRNA(His) + L-histidine + ATP = L-histidyl-tRNA(His) + AMP + diphosphate + H(+). In Francisella tularensis subsp. tularensis (strain SCHU S4 / Schu 4), this protein is Histidine--tRNA ligase.